The chain runs to 551 residues: Membrane protein insertase YidC (551 aa).

Residues 3–23 form a helical membrane-spanning segment; that stretch reads ANHIRILLLVTIAIMFISLMG. Positions 33-47 are enriched in polar residues; the sequence is NTKQQTSATQNNSHY. The interval 33-58 is disordered; the sequence is NTKQQTSATQNNSHYDNADSSTNTDV. 3 helical membrane-spanning segments follow: residues 361–381, 431–451, and 504–524; these read LVGN…LIFY, LSGC…YWVL, and VMMF…SGLV.

This sequence belongs to the OXA1/ALB3/YidC family. Type 1 subfamily. As to quaternary structure, interacts with the Sec translocase complex via SecD. Specifically interacts with transmembrane segments of nascent integral membrane proteins during membrane integration.

It is found in the cell inner membrane. Its function is as follows. Required for the insertion and/or proper folding and/or complex formation of integral membrane proteins into the membrane. Involved in integration of membrane proteins that insert both dependently and independently of the Sec translocase complex, as well as at least some lipoproteins. Aids folding of multispanning membrane proteins. The protein is Membrane protein insertase YidC of Francisella tularensis subsp. novicida (strain U112).